The primary structure comprises 223 residues: ATP phosphoribosyltransferase (223 aa).

This sequence belongs to the ATP phosphoribosyltransferase family. Short subfamily. As to quaternary structure, heteromultimer composed of HisG and HisZ subunits.

The protein resides in the cytoplasm. The enzyme catalyses 1-(5-phospho-beta-D-ribosyl)-ATP + diphosphate = 5-phospho-alpha-D-ribose 1-diphosphate + ATP. It participates in amino-acid biosynthesis; L-histidine biosynthesis; L-histidine from 5-phospho-alpha-D-ribose 1-diphosphate: step 1/9. Catalyzes the condensation of ATP and 5-phosphoribose 1-diphosphate to form N'-(5'-phosphoribosyl)-ATP (PR-ATP). Has a crucial role in the pathway because the rate of histidine biosynthesis seems to be controlled primarily by regulation of HisG enzymatic activity. The sequence is that of ATP phosphoribosyltransferase from Desulfitobacterium hafniense (strain Y51).